We begin with the raw amino-acid sequence, 272 residues long: Formamidopyrimidine-DNA glycosylase (272 aa).

Proline 2 (schiff-base intermediate with DNA) is an active-site residue. The active-site Proton donor is glutamate 3. Residue lysine 58 is the Proton donor; for beta-elimination activity of the active site. Positions 92, 111, and 153 each coordinate DNA. The segment at 238–272 adopts an FPG-type zinc-finger fold; that stretch reads NVYGRGGEPCPVCAKPLTEKPLSQRTTVYCTHCQN. The Proton donor; for delta-elimination activity role is filled by arginine 262.

It belongs to the FPG family. Monomer. Requires Zn(2+) as cofactor.

The catalysed reaction is Hydrolysis of DNA containing ring-opened 7-methylguanine residues, releasing 2,6-diamino-4-hydroxy-5-(N-methyl)formamidopyrimidine.. It catalyses the reaction 2'-deoxyribonucleotide-(2'-deoxyribose 5'-phosphate)-2'-deoxyribonucleotide-DNA = a 3'-end 2'-deoxyribonucleotide-(2,3-dehydro-2,3-deoxyribose 5'-phosphate)-DNA + a 5'-end 5'-phospho-2'-deoxyribonucleoside-DNA + H(+). In terms of biological role, involved in base excision repair of DNA damaged by oxidation or by mutagenic agents. Acts as a DNA glycosylase that recognizes and removes damaged bases. Has a preference for oxidized purines, such as 7,8-dihydro-8-oxoguanine (8-oxoG). Has AP (apurinic/apyrimidinic) lyase activity and introduces nicks in the DNA strand. Cleaves the DNA backbone by beta-delta elimination to generate a single-strand break at the site of the removed base with both 3'- and 5'-phosphates. The sequence is that of Formamidopyrimidine-DNA glycosylase from Teredinibacter turnerae (strain ATCC 39867 / T7901).